We begin with the raw amino-acid sequence, 330 residues long: AP-1-like transcription factor YAP3 (330 aa).

The tract at residues 114-150 (SYSNTNYFSKNNGISPSSRSPSVAHNENVPDDSKAKK) is disordered. Residues 121–138 (FSKNNGISPSSRSPSVAH) show a composition bias toward polar residues. The residue at position 135 (Ser-135) is a Phosphoserine. One can recognise a bZIP domain in the interval 144 to 207 (DDSKAKKKAQ…TEINAENRLL (64 aa)). A basic motif region spans residues 147–168 (KAKKKAQNRAAQKAFRERKEAR). Positions 172 to 207 (LQDKLLESERNRQSLLKEIEELRKANTEINAENRLL) are leucine-zipper.

Belongs to the bZIP family. YAP subfamily. As to quaternary structure, homodimer. Interacts with the C-terminal, cytoplasmic tail of the multidrug resistance ABC transporter PDR5.

The protein resides in the cytoplasm. The protein localises to the nucleus. Functionally, transcription activator involved in the regulation of genes expressed in response to environmental changes. When overexpressed it activates transcription of the multidrug resistance ABC transporter PDR5, thus conferring resistance to the fungicide fluconazole (FCZ) and cycloheximide. When overexpressed, it also confers, independent of PDR5, increased resistance to 4-nitroquinoline-N-oxide (4-NQO). Preferentially binds 5'-TTACTAA-3'. This Saccharomyces cerevisiae (strain ATCC 204508 / S288c) (Baker's yeast) protein is AP-1-like transcription factor YAP3 (YAP3).